A 126-amino-acid polypeptide reads, in one-letter code: Protein ApaG (126 aa).

The 125-residue stretch at 2–126 folds into the ApaG domain; it reads ADKLYQMEVQ…MTLVAPRVLH (125 aa).

This Chromobacterium violaceum (strain ATCC 12472 / DSM 30191 / JCM 1249 / CCUG 213 / NBRC 12614 / NCIMB 9131 / NCTC 9757 / MK) protein is Protein ApaG.